A 207-amino-acid chain; its full sequence is Small ribosomal subunit protein uS4 (207 aa).

Residues 31 to 54 (KSKFETKPGQHGRTSGSRTSDFGL) form a disordered region. Residues 42–52 (GRTSGSRTSDF) are compositionally biased toward polar residues. One can recognise an S4 RNA-binding domain in the interval 97–158 (SRLDNVVYRM…KAKKQLRVTE (62 aa)).

This sequence belongs to the universal ribosomal protein uS4 family. Part of the 30S ribosomal subunit. Contacts protein S5. The interaction surface between S4 and S5 is involved in control of translational fidelity.

Its function is as follows. One of the primary rRNA binding proteins, it binds directly to 16S rRNA where it nucleates assembly of the body of the 30S subunit. In terms of biological role, with S5 and S12 plays an important role in translational accuracy. The polypeptide is Small ribosomal subunit protein uS4 (Methylibium petroleiphilum (strain ATCC BAA-1232 / LMG 22953 / PM1)).